Reading from the N-terminus, the 343-residue chain is MSYTLGQLAAKVQGVVKGDADLVIDKLGSLENATSKELSFLANSKYQSLLGTTSAGAVLVKTDELAQLVDNAIVVSNPYLAFAQISHLFVPTTHSWSGIHQSAVVSPKATIAENVVVGPNAVIDDDVLIAEDCVIGAGSVLSRGVKIGKGSRIYSNVTLYHDVEVGEACIIHSGTVIGADGFGFAPNDGFWEKIDQLGSVIIGNNVEIGANSTIDRGAIENTQIGNGVKIDNQVQIAHNVVIGDNTAIAGCVGIAGSVKIGASCTISGGAGIAGHLSIVDHTHITGMTMITKSIDEAGSYSSGMGMEPTGKWRRTAARIRRIDEMAKQISSLGQQIKKLSDKG.

His-238 acts as the Proton acceptor in catalysis.

It belongs to the transferase hexapeptide repeat family. LpxD subfamily. In terms of assembly, homotrimer.

It catalyses the reaction a UDP-3-O-[(3R)-3-hydroxyacyl]-alpha-D-glucosamine + a (3R)-hydroxyacyl-[ACP] = a UDP-2-N,3-O-bis[(3R)-3-hydroxyacyl]-alpha-D-glucosamine + holo-[ACP] + H(+). It functions in the pathway bacterial outer membrane biogenesis; LPS lipid A biosynthesis. Its function is as follows. Catalyzes the N-acylation of UDP-3-O-acylglucosamine using 3-hydroxyacyl-ACP as the acyl donor. Is involved in the biosynthesis of lipid A, a phosphorylated glycolipid that anchors the lipopolysaccharide to the outer membrane of the cell. The polypeptide is UDP-3-O-acylglucosamine N-acyltransferase (Marinomonas sp. (strain MWYL1)).